The chain runs to 295 residues: Bifunctional protein FolD (295 aa).

NADP(+) contacts are provided by residues 165–167, S192, and I233; that span reads GRG.

The protein belongs to the tetrahydrofolate dehydrogenase/cyclohydrolase family. As to quaternary structure, homodimer.

The catalysed reaction is (6R)-5,10-methylene-5,6,7,8-tetrahydrofolate + NADP(+) = (6R)-5,10-methenyltetrahydrofolate + NADPH. It catalyses the reaction (6R)-5,10-methenyltetrahydrofolate + H2O = (6R)-10-formyltetrahydrofolate + H(+). Its pathway is one-carbon metabolism; tetrahydrofolate interconversion. Its function is as follows. Catalyzes the oxidation of 5,10-methylenetetrahydrofolate to 5,10-methenyltetrahydrofolate and then the hydrolysis of 5,10-methenyltetrahydrofolate to 10-formyltetrahydrofolate. The protein is Bifunctional protein FolD of Tropheryma whipplei (strain Twist) (Whipple's bacillus).